The sequence spans 490 residues: Cysteine protease 1 (490 aa).

The signal sequence occupies residues 1 to 31 (MAGGGGKSVAAALAMACFLLILAAFAPPAAA). Positions 32-154 (APPDIMSIIR…EAYRHDGVEA (123 aa)) are cleaved as a propeptide — activation peptide. 5 disulfides stabilise this stretch: Cys-177-Cys-220, Cys-211-Cys-253, Cys-311-Cys-364, Cys-395-Cys-407, and Cys-401-Cys-422. The active site involves Cys-180. Catalysis depends on residues His-317 and Asn-339. Asn-356 is a glycosylation site (N-linked (GlcNAc...) asparagine). Positions 379 to 490 (NPKPSPPSPA…FVVLNREDLV (112 aa)) are cleaved as a propeptide — removed in mature form.

The protein belongs to the peptidase C1 family. As to expression, highly expressed in the tapetum and developing pollen of the anther locules. Weakly expressed in root and germinating seed, hardly in the anther-less-flower and not detected in leaf.

Cysteine protease that may play a role in pollen development. May be regulated by the transcription factor UDT1 in developing anthers and play a role in tapetum development. Positively regulated by the transcription factor TDR in developing anthers and may play a role in tapetum programmed cell death (PCD). The protein is Cysteine protease 1 (CP1) of Oryza sativa subsp. japonica (Rice).